The following is a 639-amino-acid chain: Probable endo-1,3(4)-beta-glucanase ACLA_073210 (639 aa).

An N-terminal signal peptide occupies residues 1–21; the sequence is MAPSSLLLSVGSLIASSLASA. In terms of domain architecture, GH16 spans 26-290; that stretch reads IREQSQSYQL…WAGNVFGESG (265 aa). The N-linked (GlcNAc...) asparagine glycan is linked to N65. The Nucleophile role is filled by E146. E151 (proton donor) is an active-site residue. 2 disordered regions span residues 337–384 and 442–545; these read TVAS…TVAE and QSSS…GSSI. Over residues 339–348 the composition is skewed to polar residues; the sequence is ASPNTASEVH. 2 stretches are compositionally biased toward low complexity: residues 362 to 376 and 478 to 488; these read PTVPTAAETTVVPPA and TTTEAVAETET. The GPI-anchor amidated alanine moiety is linked to residue A617. A propeptide spans 618–639 (removed in mature form); the sequence is GARKLSVGLSGLVGALAVAALA.

It belongs to the glycosyl hydrolase 16 family.

The protein localises to the cell membrane. The enzyme catalyses Endohydrolysis of (1-&gt;3)- or (1-&gt;4)-linkages in beta-D-glucans when the glucose residue whose reducing group is involved in the linkage to be hydrolyzed is itself substituted at C-3.. Mixed-linked glucanase involved in the degradation of complex natural cellulosic substrates. The chain is Probable endo-1,3(4)-beta-glucanase ACLA_073210 from Aspergillus clavatus (strain ATCC 1007 / CBS 513.65 / DSM 816 / NCTC 3887 / NRRL 1 / QM 1276 / 107).